A 377-amino-acid chain; its full sequence is Succinyl-diaminopimelate desuccinylase 2 (377 aa).

Position 62 (His-62) interacts with Zn(2+). The active site involves Asp-64. Zn(2+) is bound at residue Asp-95. Glu-129 (proton acceptor) is an active-site residue. Zn(2+) is bound by residues Glu-130, Glu-158, and His-350.

Belongs to the peptidase M20A family. DapE subfamily. Homodimer. It depends on Zn(2+) as a cofactor. Requires Co(2+) as cofactor.

It catalyses the reaction N-succinyl-(2S,6S)-2,6-diaminopimelate + H2O = (2S,6S)-2,6-diaminopimelate + succinate. It functions in the pathway amino-acid biosynthesis; L-lysine biosynthesis via DAP pathway; LL-2,6-diaminopimelate from (S)-tetrahydrodipicolinate (succinylase route): step 3/3. In terms of biological role, catalyzes the hydrolysis of N-succinyl-L,L-diaminopimelic acid (SDAP), forming succinate and LL-2,6-diaminopimelate (DAP), an intermediate involved in the bacterial biosynthesis of lysine and meso-diaminopimelic acid, an essential component of bacterial cell walls. The chain is Succinyl-diaminopimelate desuccinylase 2 from Shewanella loihica (strain ATCC BAA-1088 / PV-4).